A 585-amino-acid polypeptide reads, in one-letter code: Arginine--tRNA ligase (585 aa).

Positions 131 to 141 (ANPTGPMHVGH) match the 'HIGH' region motif.

Belongs to the class-I aminoacyl-tRNA synthetase family. Monomer.

It is found in the cytoplasm. It carries out the reaction tRNA(Arg) + L-arginine + ATP = L-arginyl-tRNA(Arg) + AMP + diphosphate. The protein is Arginine--tRNA ligase of Rhizobium etli (strain ATCC 51251 / DSM 11541 / JCM 21823 / NBRC 15573 / CFN 42).